Here is a 982-residue protein sequence, read N- to C-terminus: Coatomer subunit beta (982 aa).

HEAT repeat units lie at residues 16–53 (SGAP…NGEP), 130–167 (ELVE…RFPE), 241–278 (YDKG…SPTA), and 317–352 (LQDS…NQNS).

As to quaternary structure, oligomeric complex that consists of at least the alpha, beta, beta', gamma, delta, epsilon and zeta subunits.

Its subcellular location is the cytoplasm. It localises to the golgi apparatus membrane. It is found in the cytoplasmic vesicle. The protein resides in the COPI-coated vesicle membrane. The coatomer is a cytosolic protein complex that binds to dilysine motifs and reversibly associates with Golgi non-clathrin-coated vesicles, which further mediate biosynthetic protein transport from the ER, via the Golgi up to the trans Golgi network. Coatomer complex is required for budding from Golgi membranes, and is essential for the retrograde Golgi-to-ER transport of dilysine-tagged proteins. The polypeptide is Coatomer subunit beta (Trypanosoma brucei brucei).